The primary structure comprises 315 residues: BTB/POZ domain-containing adapter for CUL3-mediated RhoA degradation protein 3 (315 aa).

Methionine 1 is modified (N-acetylmethionine). Serine 23 carries the phosphoserine modification. The 69-residue stretch at 32 to 100 folds into the BTB domain; that stretch reads KYVKLNVGGA…LRDGAVPLPE (69 aa). The Interaction with PCNA signature appears at 239 to 245; sequence QTKVEFP. The segment at 269–294 is disordered; sequence NALLEATGGAAGRSHHLDEDEERERE.

This sequence belongs to the BACURD family. As to quaternary structure, homotetramer; forms a two-fold symmetric tetramer in solution. Interacts with CUL3; interaction is direct and forms a 5:5 heterodecamer. Component of the BCR(BACURD3) E3 ubiquitin ligase complex, at least composed of CUL3, KCTD10/BACURD3 and RBX1. Interacts with DNA polymerase delta subunit 2/POLD2. Interacts with PCNA. Expressed at highest levels in lung. Also detected in testis and heart. Very low expression, if any, in brain, liver, spleen, kidney and skeletal muscle.

The protein resides in the nucleus. Its pathway is protein modification; protein ubiquitination. Substrate-specific adapter of a BCR (BTB-CUL3-RBX1) E3 ubiquitin-protein ligase complex. The BCR(BACURD3) E3 ubiquitin ligase complex mediates the ubiquitination of target proteins, leading to their degradation by the proteasome. This chain is BTB/POZ domain-containing adapter for CUL3-mediated RhoA degradation protein 3 (Kctd10), found in Rattus norvegicus (Rat).